Reading from the N-terminus, the 444-residue chain is Protein giant-lens (444 aa).

A signal peptide spans 1-24 (MPTTLMLLPCMLLLLLTAAAVAVG). 2 Two-fingered domain 1 part repeats span residues 123 to 165 (RDVR…CRCP) and 285 to 307 (CPSSLGVEDGHTIADKTRHYKMC). 8 cysteine pairs are disulfide-bonded: C141–C162, C147–C285, C164–C307, C316–C341, C343–C370, C378–C405, C384–C413, and C407–C440. 2 Two-fingered domain repeats span residues 316–370 (CTHF…LFAC) and 378–444 (CQRK…MAND). N333 carries an N-linked (GlcNAc...) asparagine glycan.

Interacts with spi. In terms of tissue distribution, during embryogenesis, expression is in a segmental pattern in the ectoderm and in the nervous system. In the eye imaginal disks, expression in photoreceptor cells begins a few rows posterior to the morphogenetic furrow. Also expressed in the wing disk. In the adult, expression is seen in the retina and lamina.

Its subcellular location is the secreted. Functionally, regulates cell determination; development of ommatidia and optic lobe. Is a signaling molecule involved in the process of axon pathfinding in the eye. Part of the Ras pathway regulating programmed cell death in pupal eyes; activated by lozenge (lz). Antagonist for the Egfr receptor (gurken). Inhibits Egfr signaling without interacting directly with the receptor, but instead by sequestering the Egfr-activating ligand spitz (spi). This is Protein giant-lens (aos) from Drosophila melanogaster (Fruit fly).